We begin with the raw amino-acid sequence, 541 residues long: Pseudokinase FAM20A (541 aa).

The N-terminal stretch at 1-33 is a signal peptide; that stretch reads MPGLRRDRLLALLLLGALFSADLYFHLWPQVQR. 3 N-linked (GlcNAc...) asparagine glycosylation sites follow: asparagine 70, asparagine 145, and asparagine 287. 4 cysteine pairs are disulfide-bonded: cysteine 314/cysteine 330, cysteine 319/cysteine 323, cysteine 378/cysteine 452, and cysteine 453/cysteine 512. A glycan (N-linked (GlcNAc...) asparagine) is linked at asparagine 388. Asparagine 538 carries N-linked (GlcNAc...) asparagine glycosylation.

Belongs to the FAM20 family. Interacts with FAM20C; probably forming a heterotetramer of 2 subunits of FAM20A and 2 subunits of FAM20C. In terms of processing, N-glycosylated. As to expression, in the mammary gland, expressed at higher levels in lactating mice than in virgin mice. Observed throughout the tissues of the mandibular incisor, including the secretory and maturation stage ameloblasts, the suprabasal layers of the gingival epithelium and the odontoblasts. Weak expression in the enamel matrix.

It is found in the secreted. The protein localises to the golgi apparatus. The protein resides in the endoplasmic reticulum. Its function is as follows. Pseudokinase that acts as an allosteric activator of the Golgi serine/threonine protein kinase FAM20C and is involved in biomineralization of teeth. Forms a complex with FAM20C and increases the ability of FAM20C to phosphorylate the proteins that form the 'matrix' that guides the deposition of the enamel minerals. The chain is Pseudokinase FAM20A from Mus musculus (Mouse).